The sequence spans 498 residues: Sulfate adenylyltransferase subunit 1 (498 aa).

Residues threonine 30–glutamine 246 form the tr-type G domain. Residues glycine 39–serine 46 are G1. Residue glycine 39–serine 46 participates in GTP binding. The segment at glycine 97 to aspartate 101 is G2. The tract at residues aspartate 118–glycine 121 is G3. GTP-binding positions include aspartate 118–histidine 122 and asparagine 173–aspartate 176. The interval asparagine 173–aspartate 176 is G4. The segment at serine 210–leucine 212 is G5.

This sequence belongs to the TRAFAC class translation factor GTPase superfamily. Classic translation factor GTPase family. CysN/NodQ subfamily. Heterodimer composed of CysD, the smaller subunit, and CysN.

The catalysed reaction is sulfate + ATP + H(+) = adenosine 5'-phosphosulfate + diphosphate. It participates in sulfur metabolism; hydrogen sulfide biosynthesis; sulfite from sulfate: step 1/3. Functionally, with CysD forms the ATP sulfurylase (ATPS) that catalyzes the adenylation of sulfate producing adenosine 5'-phosphosulfate (APS) and diphosphate, the first enzymatic step in sulfur assimilation pathway. APS synthesis involves the formation of a high-energy phosphoric-sulfuric acid anhydride bond driven by GTP hydrolysis by CysN coupled to ATP hydrolysis by CysD. The polypeptide is Sulfate adenylyltransferase subunit 1 (Rhizobium meliloti (strain 1021) (Ensifer meliloti)).